The sequence spans 136 residues: Protein NrdI (136 aa).

Belongs to the NrdI family.

Its function is as follows. Probably involved in ribonucleotide reductase function. The sequence is that of Protein NrdI from Shigella dysenteriae serotype 1 (strain Sd197).